Consider the following 84-residue polypeptide: Putative defensin-like protein 139 (84 aa).

A signal peptide spans 1-28; that stretch reads MEPSNQIFFYLRRSKLLSGLGEIRMAKG. Cystine bridges form between C37–C81, C46–C65, C51–C75, and C55–C77.

It belongs to the DEFL family.

It is found in the secreted. This chain is Putative defensin-like protein 139 (LCR7), found in Arabidopsis thaliana (Mouse-ear cress).